A 296-amino-acid polypeptide reads, in one-letter code: L-isoleucine 3(1)-dioxygenase (296 aa).

Positions 176, 178, and 267 each coordinate Fe cation.

This sequence belongs to the iron/ascorbate-dependent oxidoreductase family. The cofactor is L-ascorbate. It depends on Fe(2+) as a cofactor.

The enzyme catalyses L-isoleucine + 2-oxoglutarate + O2 = 3(1)-hydroxy-L-isoleucine + succinate + CO2. Catalyzes the hydroxylation of L-isoleucine at the C-4' position to form L-4'-hydroxyisoleucine (4'-HIL). Exhibits low activity with L-valine and L-methionine. This chain is L-isoleucine 3(1)-dioxygenase, found in Pantoea ananatis (strain AJ13355).